Consider the following 288-residue polypeptide: Coiled-coil domain-containing protein 190 (288 aa).

The stretch at 16-69 forms a coiled coil; it reads LERKSARQAEARLSLRLQRLEIICLYHVKSLAREQRQLQKELQRLQQDIIKKRF. The interval 141–235 is disordered; sequence GERTSCFKEG…SSVDYAGSFK (95 aa). Basic and acidic residues predominate over residues 177-188; that stretch reads HDQELSTNKTED. Residues 203–213 are compositionally biased toward polar residues; that stretch reads ANETRSENASQ.

The chain is Coiled-coil domain-containing protein 190 (Ccdc190) from Mus musculus (Mouse).